A 635-amino-acid polypeptide reads, in one-letter code: 1-deoxy-D-xylulose-5-phosphate synthase (635 aa).

Thiamine diphosphate contacts are provided by residues His-78 and 119–121; that span reads GHS. Residue Asp-151 participates in Mg(2+) binding. Thiamine diphosphate is bound by residues 152-153, Asn-180, Tyr-289, and Glu-371; that span reads GA. Asn-180 is a Mg(2+) binding site.

Belongs to the transketolase family. DXPS subfamily. Homodimer. The cofactor is Mg(2+). It depends on thiamine diphosphate as a cofactor.

It catalyses the reaction D-glyceraldehyde 3-phosphate + pyruvate + H(+) = 1-deoxy-D-xylulose 5-phosphate + CO2. It participates in metabolic intermediate biosynthesis; 1-deoxy-D-xylulose 5-phosphate biosynthesis; 1-deoxy-D-xylulose 5-phosphate from D-glyceraldehyde 3-phosphate and pyruvate: step 1/1. Functionally, catalyzes the acyloin condensation reaction between C atoms 2 and 3 of pyruvate and glyceraldehyde 3-phosphate to yield 1-deoxy-D-xylulose-5-phosphate (DXP). In Bartonella tribocorum (strain CIP 105476 / IBS 506), this protein is 1-deoxy-D-xylulose-5-phosphate synthase.